The primary structure comprises 116 residues: Ribosome-binding factor A (116 aa).

This sequence belongs to the RbfA family. In terms of assembly, monomer. Binds 30S ribosomal subunits, but not 50S ribosomal subunits or 70S ribosomes.

Its subcellular location is the cytoplasm. Its function is as follows. One of several proteins that assist in the late maturation steps of the functional core of the 30S ribosomal subunit. Associates with free 30S ribosomal subunits (but not with 30S subunits that are part of 70S ribosomes or polysomes). Required for efficient processing of 16S rRNA. May interact with the 5'-terminal helix region of 16S rRNA. In Streptococcus pneumoniae (strain ATCC BAA-255 / R6), this protein is Ribosome-binding factor A.